The following is a 211-amino-acid chain: Thiamine-phosphate synthase (211 aa).

4-amino-2-methyl-5-(diphosphooxymethyl)pyrimidine-binding positions include Q37–K41 and N69. Mg(2+) contacts are provided by D70 and D89. A 4-amino-2-methyl-5-(diphosphooxymethyl)pyrimidine-binding site is contributed by S108. T134–T136 is a binding site for 2-[(2R,5Z)-2-carboxy-4-methylthiazol-5(2H)-ylidene]ethyl phosphate. K137 contributes to the 4-amino-2-methyl-5-(diphosphooxymethyl)pyrimidine binding site. 2-[(2R,5Z)-2-carboxy-4-methylthiazol-5(2H)-ylidene]ethyl phosphate is bound by residues G166 and V186–S187.

The protein belongs to the thiamine-phosphate synthase family. Mg(2+) serves as cofactor.

The catalysed reaction is 2-[(2R,5Z)-2-carboxy-4-methylthiazol-5(2H)-ylidene]ethyl phosphate + 4-amino-2-methyl-5-(diphosphooxymethyl)pyrimidine + 2 H(+) = thiamine phosphate + CO2 + diphosphate. It catalyses the reaction 2-(2-carboxy-4-methylthiazol-5-yl)ethyl phosphate + 4-amino-2-methyl-5-(diphosphooxymethyl)pyrimidine + 2 H(+) = thiamine phosphate + CO2 + diphosphate. The enzyme catalyses 4-methyl-5-(2-phosphooxyethyl)-thiazole + 4-amino-2-methyl-5-(diphosphooxymethyl)pyrimidine + H(+) = thiamine phosphate + diphosphate. Its pathway is cofactor biosynthesis; thiamine diphosphate biosynthesis; thiamine phosphate from 4-amino-2-methyl-5-diphosphomethylpyrimidine and 4-methyl-5-(2-phosphoethyl)-thiazole: step 1/1. Its function is as follows. Condenses 4-methyl-5-(beta-hydroxyethyl)thiazole monophosphate (THZ-P) and 2-methyl-4-amino-5-hydroxymethyl pyrimidine pyrophosphate (HMP-PP) to form thiamine monophosphate (TMP). The protein is Thiamine-phosphate synthase of Escherichia coli O157:H7.